Here is a 22-residue protein sequence, read N- to C-terminus: Brevinin-1OKc (22 aa).

The residue at position 22 (Lys-22) is a Lysine amide.

As to expression, expressed by the skin glands.

The protein resides in the secreted. Antimicrobial peptide. Active against Gram-negative bacterium E.coli (MIC=6 uM) and against Gram-positive bacterium S.aureus (MIC=12.5 uM). This chain is Brevinin-1OKc, found in Nidirana okinavana (Kampira Falls frog).